A 316-amino-acid chain; its full sequence is Porphobilinogen deaminase (316 aa).

Cys-245 carries the S-(dipyrrolylmethanemethyl)cysteine modification.

This sequence belongs to the HMBS family. As to quaternary structure, monomer. Requires dipyrromethane as cofactor.

It carries out the reaction 4 porphobilinogen + H2O = hydroxymethylbilane + 4 NH4(+). It participates in porphyrin-containing compound metabolism; protoporphyrin-IX biosynthesis; coproporphyrinogen-III from 5-aminolevulinate: step 2/4. The protein operates within porphyrin-containing compound metabolism; chlorophyll biosynthesis. In terms of biological role, tetrapolymerization of the monopyrrole PBG into the hydroxymethylbilane pre-uroporphyrinogen in several discrete steps. The sequence is that of Porphobilinogen deaminase from Prochlorococcus marinus subsp. pastoris (strain CCMP1986 / NIES-2087 / MED4).